The following is a 671-amino-acid chain: Kinesin-like protein KIF2C (671 aa).

Residues 1-200 form a globular region; it reads MIDFDDVAAI…CHPLTMTDPI (200 aa). The disordered stretch occupies residues 36 to 62; the sequence is KQKRRSVNSKIPAPKESLRTRSTRMST. Residue Ser-41 is modified to Phosphoserine; by AURKB. The Microtubule tip localization signal motif lies at 44–47; sequence SKIP. Ser-52, Ser-57, Ser-61, Ser-112, Ser-121, Ser-133, and Ser-138 each carry phosphoserine. The segment at 153-184 is negative regulator of microtubule-binding; the sequence is EKKAQNSEMRMKRAQEYDSSFPNWEFARMIKE. 2 cysteine pairs are disulfide-bonded: Cys-191-Cys-233 and Cys-290-Cys-506. The Kinesin motor domain occupies 204-534; sequence RICVCVRKRP…LRYADRVKEL (331 aa). 294 to 301 contacts ATP; sequence GQTGSGKT. Phosphoserine occurs at positions 465, 567, and 579. A coiled-coil region spans residues 564–604; sequence GNLSKEEEELSSQMSSFNEAMTQIRELEERAVEELKEIIQQ.

Belongs to the TRAFAC class myosin-kinesin ATPase superfamily. Kinesin family. MCAK/KIF2 subfamily. In terms of assembly, interacts with CENPH. Interacts with MTUS2/TIP150; the interaction is direct. Interacts with MAPRE1; the interaction is direct, regulated by phosphorylation and is probably required for targeting to growing microtubule plus ends. Interacts with KIF18B at microtubule tips; this interaction increases the affinity of both partners for microtubule plus ends and is required for robust microtubule depolymerization. Phosphorylation by AURKA or AURKB strongly reduces KIF18B-binding. Phosphorylation by AURKB, regulates association with centromeres and kinetochores and the microtubule depolymerization activity. Post-translationally, ubiquitinated.

The protein localises to the cytoplasm. It is found in the cytoskeleton. The protein resides in the nucleus. Its subcellular location is the chromosome. It localises to the centromere. The protein localises to the kinetochore. In terms of biological role, in complex with KIF18B, constitutes the major microtubule plus-end depolymerizing activity in mitotic cells. Regulates the turnover of microtubules at the kinetochore and functions in chromosome segregation during mitosis. Plays a role in chromosome congression and is required for the lateral to end-on conversion of the chromosome-microtubule attachment. The protein is Kinesin-like protein KIF2C (KIF2C) of Macaca fascicularis (Crab-eating macaque).